Consider the following 195-residue polypeptide: uncharacterized protein (195 aa).

Residues 34–165 form the Nudix hydrolase domain; it reads SHHAAVLIPI…WLDIHRGGVN (132 aa). A Nudix box motif is present at residues 72–94; the sequence is GKADPQDSSLIETALREAEEEVA. Mg(2+) contacts are provided by E88 and E92.

Belongs to the Nudix hydrolase family. PCD1 subfamily. It depends on Mn(2+) as a cofactor. Requires Mg(2+) as cofactor.

Its function is as follows. Probably mediates the hydrolysis of some nucleoside diphosphate derivatives. This is an uncharacterized protein from Yersinia enterocolitica serotype O:8 / biotype 1B (strain NCTC 13174 / 8081).